Reading from the N-terminus, the 800-residue chain is Fibroblast growth factor receptor 3 (800 aa).

An N-terminal signal peptide occupies residues Met-1 to Ser-20. The Ig-like C2-type 1 domain maps to Ala-21–Ser-122. Residues Ala-21–Asp-363 are Extracellular-facing. Cys-55 and Cys-101 are oxidised to a cystine. Residues Asn-77, Asn-90, and Asn-112 are each glycosylated (N-linked (GlcNAc...) asparagine). The segment covering Gly-124 to Ala-136 has biased composition (acidic residues). The segment at Gly-124–Ala-143 is disordered. 2 Ig-like C2-type domains span residues Pro-144–Asp-237 and Pro-246–Thr-348. The cysteines at positions 169 and 221 are disulfide-linked. N-linked (GlcNAc...) asparagine glycosylation is found at Asn-218, Asn-255, Asn-287, Asn-308, and Asn-321. A disulfide bond links Cys-268 and Cys-332. A helical membrane pass occupies residues Ile-364 to Cys-384. Topologically, residues Arg-385 to Thr-800 are cytoplasmic. Residues Leu-460–Val-739 form the Protein kinase domain. ATP is bound by residues Leu-466–Val-474 and Lys-496. Residue Asp-605 is the Proton acceptor of the active site. Tyr-635, Tyr-636, Tyr-712, and Tyr-748 each carry phosphotyrosine; by autocatalysis. A compositionally biased stretch (polar residues) spans Asp-764–Asp-773. Residues Asp-764–Thr-800 form a disordered region.

It belongs to the protein kinase superfamily. Tyr protein kinase family. Fibroblast growth factor receptor subfamily. Monomer. Homodimer after ligand binding. Autophosphorylated. Binding of FGF family members together with heparan sulfate proteoglycan or heparin promotes receptor dimerization and autophosphorylation on tyrosine residues. Autophosphorylation occurs in trans between the two FGFR molecules present in the dimer.

It is found in the cell membrane. It carries out the reaction L-tyrosyl-[protein] + ATP = O-phospho-L-tyrosyl-[protein] + ADP + H(+). With respect to regulation, present in an inactive conformation in the absence of bound ligand. Ligand binding leads to dimerization and activation by autophosphorylation on tyrosine residues. Its function is as follows. Tyrosine-protein kinase that acts as a cell-surface receptor for fibroblast growth factors and plays an essential role in the regulation of cell proliferation, differentiation and apoptosis. Plays an essential role in the regulation of chondrocyte differentiation, proliferation and apoptosis, and is required for normal skeleton development. Regulates both osteogenesis and postnatal bone mineralization by osteoblasts. Promotes apoptosis in chondrocytes, but can also promote cancer cell proliferation. Phosphorylates PLCG1, CBL and FRS2. Ligand binding leads to the activation of several signaling cascades. Activation of PLCG1 leads to the production of the cellular signaling molecules diacylglycerol and inositol 1,4,5-trisphosphate. Phosphorylation of FRS2 triggers recruitment of GRB2, GAB1, PIK3R1 and SOS1, and mediates activation of RAS, MAPK1/ERK2, MAPK3/ERK1 and the MAP kinase signaling pathway, as well as of the AKT1 signaling pathway. In Danio rerio (Zebrafish), this protein is Fibroblast growth factor receptor 3 (fgfr3).